A 289-amino-acid polypeptide reads, in one-letter code: Formamidopyrimidine-DNA glycosylase 1 (289 aa).

Catalysis depends on P2, which acts as the Schiff-base intermediate with DNA. E3 functions as the Proton donor in the catalytic mechanism. Residue K61 is the Proton donor; for beta-elimination activity of the active site. H100, R119, and K165 together coordinate DNA. Residues 251–285 (DAYGREGENCRRCGAVIRRERFMNRSSFYCPRCQP) form an FPG-type zinc finger. The Proton donor; for delta-elimination activity role is filled by R275.

This sequence belongs to the FPG family. As to quaternary structure, monomer. Requires Zn(2+) as cofactor.

It catalyses the reaction Hydrolysis of DNA containing ring-opened 7-methylguanine residues, releasing 2,6-diamino-4-hydroxy-5-(N-methyl)formamidopyrimidine.. The enzyme catalyses 2'-deoxyribonucleotide-(2'-deoxyribose 5'-phosphate)-2'-deoxyribonucleotide-DNA = a 3'-end 2'-deoxyribonucleotide-(2,3-dehydro-2,3-deoxyribose 5'-phosphate)-DNA + a 5'-end 5'-phospho-2'-deoxyribonucleoside-DNA + H(+). In terms of biological role, involved in base excision repair of DNA damaged by oxidation or by mutagenic agents. Acts as a DNA glycosylase that recognizes and removes damaged bases. Has a preference for oxidized purines, such as 7,8-dihydro-8-oxoguanine (8-oxoG) when paired with C, G or T, as well as methyl-faPy (formanidopyrimidine residues) in poly(dG-dC) and spiroiminodihydantoin:C base pairs. Unlike its E.coli ortholog has no activity on 8-oxoG:A. Has AP (apurinic/apyrimidinic) lyase activity and introduces nicks in the DNA strand. Cleaves the DNA backbone by beta-delta elimination to generate a single-strand break at the site of the removed base with both 3'- and 5'-phosphates. Cleaves ssDNA containing an AP site. Complements the H(2)O(2) sensitivity of an M.smegmatis fpg disruption mutant; upon expression in M.smegmatis excises 8-oxoG from dsDNA. The polypeptide is Formamidopyrimidine-DNA glycosylase 1 (fpg1) (Mycobacterium tuberculosis (strain ATCC 25618 / H37Rv)).